Reading from the N-terminus, the 99-residue chain is Signal recognition particle 19 kDa protein (99 aa).

This sequence belongs to the SRP19 family. In terms of assembly, part of the signal recognition particle protein translocation system, which is composed of SRP and FtsY. Archaeal SRP consists of a 7S RNA molecule of 300 nucleotides and two protein subunits: SRP54 and SRP19.

Its subcellular location is the cytoplasm. Its function is as follows. Involved in targeting and insertion of nascent membrane proteins into the cytoplasmic membrane. Binds directly to 7S RNA and mediates binding of the 54 kDa subunit of the SRP. The protein is Signal recognition particle 19 kDa protein of Ignicoccus hospitalis (strain KIN4/I / DSM 18386 / JCM 14125).